Consider the following 393-residue polypeptide: Mitogen-activated protein kinase homolog NTF4 (393 aa).

The tract at residues 1–32 is disordered; that stretch reads MDGPAHQTDTVMSDAAGQQPAPPSQPVAGIDN. The Protein kinase domain maps to 60-345; the sequence is KPPIMPIGKG…VEDALAHPYL (286 aa). Residues 66–74 and K89 each bind ATP; that span reads IGKGAYGIV. Catalysis depends on D186, which acts as the Proton acceptor. T218 bears the Phosphothreonine mark. Positions 218-220 match the TXY motif; sequence TEY. The residue at position 220 (Y220) is a Phosphotyrosine.

This sequence belongs to the protein kinase superfamily. CMGC Ser/Thr protein kinase family. MAP kinase subfamily. Mg(2+) is required as a cofactor. In terms of processing, dually phosphorylated on Thr-218 and Tyr-220, which activates the enzyme. Very low autophosphorylation, although dramatically increased when Mn(2+) is added to the reaction instead of Mg(2+).

The enzyme catalyses L-seryl-[protein] + ATP = O-phospho-L-seryl-[protein] + ADP + H(+). It carries out the reaction L-threonyl-[protein] + ATP = O-phospho-L-threonyl-[protein] + ADP + H(+). Activated by tyrosine and threonine phosphorylation. The polypeptide is Mitogen-activated protein kinase homolog NTF4 (NTF4) (Nicotiana tabacum (Common tobacco)).